The primary structure comprises 203 residues: Ras-related protein Rab-30 (203 aa).

Positions 20, 21, 22, 23, 24, and 41 each coordinate GTP. Threonine 23 serves as a coordination point for Mg(2+). A switch-I region spans residues 36 to 44; the sequence is PGQGATIGV. Mg(2+)-binding residues include threonine 41 and aspartate 64. GTP-binding residues include glycine 67, asparagine 122, lysine 123, aspartate 125, alanine 153, and lysine 154. A switch-II region spans residues 67–83; sequence GQERFRSITQSYYRSAN. Residues cysteine 199 and cysteine 200 are each lipidated (S-geranylgeranyl cysteine). Cysteine 200 carries the post-translational modification Cysteine methyl ester. The propeptide at 201-203 is removed in mature form; that stretch reads NFN.

This sequence belongs to the small GTPase superfamily. Rab family. Mg(2+) is required as a cofactor.

It localises to the membrane. The protein localises to the golgi apparatus. Its subcellular location is the trans-Golgi network membrane. The protein resides in the cis-Golgi network membrane. It is found in the golgi apparatus membrane. It localises to the cytoplasm. The protein localises to the cytoplasmic vesicle. Its subcellular location is the autophagosome membrane. The protein resides in the autolysosome membrane. The catalysed reaction is GTP + H2O = GDP + phosphate + H(+). Its activity is regulated as follows. Regulated by guanine nucleotide exchange factors (GEFs) which promote the exchange of bound GDP for free GTP. Regulated by GTPase activating proteins (GAPs) which increase the GTP hydrolysis activity. Inhibited by GDP dissociation inhibitors (GDIs). In terms of biological role, the small GTPases Rab are key regulators of intracellular membrane trafficking, from the formation of transport vesicles to their fusion with membranes. Rabs cycle between an inactive GDP-bound form and an active GTP-bound form that is able to recruit to membranes different sets of downstream effectors directly responsible for vesicle formation, movement, tethering and fusion. RAB30 is required for maintaining the structural integrity of the Golgi apparatus, possibly by mediating interactions with cytoplasmic scaffolding proteins. Facilitates lipid homeostasis during fasting by regulating hepatic protein and lipid trafficking in a PPAR-alpha-dependent manner. Promotes autophagosome biogenesis during bacterial infection such as group A Streptococcus infection. The polypeptide is Ras-related protein Rab-30 (RAB30) (Bos taurus (Bovine)).